A 325-amino-acid polypeptide reads, in one-letter code: Casein kinase I isoform alpha (325 aa).

Ala2 carries the post-translational modification N-acetylalanine. Ser4 bears the Phosphoserine mark. Lys8 bears the N6-acetyllysine mark. The 269-residue stretch at 17-285 (YKLVRKIGSG…YLRQLFRILF (269 aa)) folds into the Protein kinase domain. Residues 23–31 (IGSGSFGDI) and Lys46 contribute to the ATP site. Asp136 (proton acceptor) is an active-site residue. Phosphoserine is present on Ile156.

Belongs to the protein kinase superfamily. CK1 Ser/Thr protein kinase family. Casein kinase I subfamily. As to quaternary structure, interacts with the Axin complex. Interacts with TUT1, leading to TUT1 phosphorylation. Interacts with FAM83A, FAM83B, FAM83C, FAM83D, FAM83E, FAM83F, FAM83G and FAM83H (via DUF1669). Interaction with FAM83H recruits CSNK1A1 to keratin filaments. Post-translationally, phosphorylated by MTOR in response to mitogenic stimulation, leading to its activation.

It localises to the cytoplasm. The protein localises to the cytoskeleton. The protein resides in the microtubule organizing center. Its subcellular location is the centrosome. It is found in the chromosome. It localises to the centromere. The protein localises to the kinetochore. The protein resides in the nucleus speckle. Its subcellular location is the cilium basal body. It is found in the spindle. The catalysed reaction is L-seryl-[protein] + ATP = O-phospho-L-seryl-[protein] + ADP + H(+). It carries out the reaction L-threonyl-[protein] + ATP = O-phospho-L-threonyl-[protein] + ADP + H(+). Its function is as follows. Casein kinases are operationally defined by their preferential utilization of acidic proteins such as caseins as substrates. Can phosphorylate a large number of proteins. Participates in Wnt signaling. Phosphorylates CTNNB1 at 'Ser-45'. May phosphorylate PER1 and PER2. May play a role in segregating chromosomes during mitosis. May play a role in keratin cytoskeleton disassembly and thereby, it may regulate epithelial cell migration. Acts as a positive regulator of mTORC1 and mTORC2 signaling in response to nutrients by mediating phosphorylation of DEPTOR inhibitor. Acts as an inhibitor of NLRP3 inflammasome assembly by mediating phosphorylation of NLRP3. This is Casein kinase I isoform alpha (Csnk1a1) from Rattus norvegicus (Rat).